We begin with the raw amino-acid sequence, 527 residues long: Matrix metalloproteinase-19 (527 aa).

Positions 1-18 (MDWQQLWLAFLLPMTVSG) are cleaved as a signal peptide. Residues 19–98 (RALGPTEKEA…EDPFNQKSLK (80 aa)) constitute a propeptide that is removed on maturation. A Cysteine switch motif is present at residues 84-91 (PRCGLEDP). Cys86 serves as a coordination point for Zn(2+). N-linked (GlcNAc...) asparagine glycosylation is present at Asn109. His213 is a Zn(2+) binding site. The active site involves Glu214. Positions 217 and 223 each coordinate Zn(2+). 4 Hemopexin repeats span residues 286-333 (PNPC…WEGL), 334-372 (PGNL…FPMK), 377-425 (EPNL…FTGV), and 426-471 (PDRP…WMHC). Cysteines 289 and 471 form a disulfide. Residues Asn464 and Asn479 are each glycosylated (N-linked (GlcNAc...) asparagine). The interval 473 to 500 (SQTPDTNSSTGDVTPSTTDTVLGTTPST) is disordered. Asp512 carries GPI-anchor amidated aspartate lipidation. The propeptide at 513–527 (SASLSFSANVTLLGA) is removed in mature form. Residue Asn521 is glycosylated (N-linked (GlcNAc...) asparagine).

This sequence belongs to the peptidase M10A family. It depends on Zn(2+) as a cofactor. Ca(2+) serves as cofactor. Post-translationally, activated by autolytic cleavage after Lys-98. Tyrosine phosphorylated by PKDCC/VLK. Highly expressed in the liver. Expressed in the arterial tunica media of large blood vessels.

The protein resides in the cell membrane. It is found in the secreted. Its subcellular location is the extracellular space. It localises to the extracellular matrix. Its function is as follows. Endopeptidase that degrades various components of the extracellular matrix, such as aggrecan and cartilage oligomeric matrix protein (comp), during development, haemostasis and pathological conditions (arthritic disease). May also play a role in neovascularization or angiogenesis. Hydrolyzes collagen type IV, laminin, nidogen, nascin-C isoform, fibronectin, and type I gelatin. This is Matrix metalloproteinase-19 (Mmp19) from Mus musculus (Mouse).